The primary structure comprises 429 residues: Enolase (429 aa).

Glutamine 162 contacts (2R)-2-phosphoglycerate. The active-site Proton donor is the glutamate 204. Mg(2+) is bound by residues aspartate 241, glutamate 282, and aspartate 309. Residues lysine 334, arginine 363, serine 364, and lysine 385 each contribute to the (2R)-2-phosphoglycerate site. Lysine 334 functions as the Proton acceptor in the catalytic mechanism.

This sequence belongs to the enolase family. Mg(2+) serves as cofactor.

It localises to the cytoplasm. Its subcellular location is the secreted. The protein localises to the cell surface. It carries out the reaction (2R)-2-phosphoglycerate = phosphoenolpyruvate + H2O. It participates in carbohydrate degradation; glycolysis; pyruvate from D-glyceraldehyde 3-phosphate: step 4/5. Its function is as follows. Catalyzes the reversible conversion of 2-phosphoglycerate (2-PG) into phosphoenolpyruvate (PEP). It is essential for the degradation of carbohydrates via glycolysis. This is Enolase from Acidothermus cellulolyticus (strain ATCC 43068 / DSM 8971 / 11B).